The chain runs to 860 residues: Leucine--tRNA ligase (860 aa).

Positions 42-52 (PYPSGRLHMGH) match the 'HIGH' region motif. Residues 619–623 (KMSKS) carry the 'KMSKS' region motif. Residue Lys-622 participates in ATP binding.

Belongs to the class-I aminoacyl-tRNA synthetase family.

The protein resides in the cytoplasm. It catalyses the reaction tRNA(Leu) + L-leucine + ATP = L-leucyl-tRNA(Leu) + AMP + diphosphate. In Escherichia coli (strain ATCC 8739 / DSM 1576 / NBRC 3972 / NCIMB 8545 / WDCM 00012 / Crooks), this protein is Leucine--tRNA ligase.